Here is a 231-residue protein sequence, read N- to C-terminus: Ribonuclease HII (231 aa).

Residues 32-223 (WPVAGMDEAG…FRLGGTEVVE (192 aa)) form the RNase H type-2 domain. A divalent metal cation is bound by residues D38, E39, and D130.

It belongs to the RNase HII family. It depends on Mn(2+) as a cofactor. Requires Mg(2+) as cofactor.

It localises to the cytoplasm. The enzyme catalyses Endonucleolytic cleavage to 5'-phosphomonoester.. Its function is as follows. Endonuclease that specifically degrades the RNA of RNA-DNA hybrids. The sequence is that of Ribonuclease HII from Mesorhizobium japonicum (strain LMG 29417 / CECT 9101 / MAFF 303099) (Mesorhizobium loti (strain MAFF 303099)).